Consider the following 448-residue polypeptide: Tapasin (448 aa).

A signal peptide spans 1–20 (MKSLSLLLAVALGLATAVSA). The Lumenal portion of the chain corresponds to 21 to 414 (GPAVIECWFV…LSGPSLEDSI (394 aa)). Cys-27 and Cys-91 are oxidised to a cystine. An N-linked (GlcNAc...) asparagine glycan is attached at Asn-253. The Ig-like C1-type domain occupies 292 to 399 (PKVSLMPATL…PASGRSAEVT (108 aa)). A disulfide bridge links Cys-315 with Cys-382. The chain crosses the membrane as a helical span at residues 415–435 (GLFLSAFFLLGLFKALGWAAV). At 436 to 448 (YLSTCKDSKKKAE) the chain is on the cytoplasmic side.

In terms of assembly, heterodimer with PDIA3; disulfide-linked. Obligatory mediator for the interaction between newly assembled MHC class I molecules, calreticulin, PDIA3 and TAP. Up to 4 MHC class I/tapasin complexes bind to 1 TAP. Interacts with HLA-G-B2M complex; this interaction is required for loading of high affinity peptides. On its own or as part of MHC class I peptide loading complex, interacts with ligand-free MR1 or MR1-B2M complex, providing for stable MR1 pools ready for metabolite antigen processing.

It localises to the endoplasmic reticulum membrane. Functionally, involved in the association of MHC class I with transporter associated with antigen processing (TAP) and in the assembly of MHC class I with peptide (peptide loading). The chain is Tapasin (TAPBP) from Chlorocebus aethiops (Green monkey).